A 502-amino-acid chain; its full sequence is Glycerate kinase (502 aa).

The protein belongs to the glycerate kinase type-2 family.

The protein resides in the cytoplasm. The catalysed reaction is (R)-glycerate + ATP = (2R)-3-phosphoglycerate + ADP + H(+). In Danio rerio (Zebrafish), this protein is Glycerate kinase (glyctk).